The chain runs to 64 residues: SPbeta prophage-derived uncharacterized protein YopV (64 aa).

This chain is SPbeta prophage-derived uncharacterized protein YopV (yopV), found in Bacillus subtilis (strain 168).